A 479-amino-acid chain; its full sequence is Probable polyamine transporter At3g19553 (479 aa).

12 helical membrane-spanning segments follow: residues 22 to 42 (LTLL…PFGV), 53 to 73 (LLAL…EALV), 86 to 106 (GYVV…EGFW), 130 to 150 (FPVL…TFSL), 160 to 180 (IVGF…VVMA), 236 to 256 (ALFG…MAGT), 275 to 295 (VGML…AAMS), 304 to 324 (MSSD…PAFF), 332 to 352 (TPTI…WMSF), 355 to 375 (IIEF…AAFV), 395 to 415 (FGVS…MVLA), and 420 to 440 (FLIS…LTLV). Positions 454 to 479 (RPVSGVSSESQLDEEHGDESAASLLP) are disordered.

The protein belongs to the amino acid-polyamine-organocation (APC) superfamily. Polyamine:cation symporter (PHS) (TC 2.A.3.12) family.

It localises to the cell membrane. In terms of biological role, probable cell membrane polyamine/proton symporter involved in the polyamine uptake in cells. This is Probable polyamine transporter At3g19553 from Arabidopsis thaliana (Mouse-ear cress).